The primary structure comprises 227 residues: UPF0173 metal-dependent hydrolase BT9727_4343 (227 aa).

It belongs to the UPF0173 family.

The protein is UPF0173 metal-dependent hydrolase BT9727_4343 of Bacillus thuringiensis subsp. konkukian (strain 97-27).